The sequence spans 165 residues: Growth arrest and DNA damage-inducible protein GADD45 alpha (165 aa).

Thr2 bears the Phosphothreonine mark.

Belongs to the GADD45 family. Interacts with AURKA, PCNA, GADD45GIP1 and MAPK14.

Its subcellular location is the nucleus. In terms of biological role, might affect PCNA interaction with some CDK (cell division protein kinase) complexes; stimulates DNA excision repair in vitro and inhibits entry of cells into S phase. In T-cells, functions as a regulator of p38 MAPKs by inhibiting p88 phosphorylation and activity. This chain is Growth arrest and DNA damage-inducible protein GADD45 alpha (Gadd45a), found in Rattus norvegicus (Rat).